We begin with the raw amino-acid sequence, 845 residues long: uncharacterized protein (845 aa).

Disordered stretches follow at residues 17 to 37 and 550 to 573; these read RRKQDALHSPSLNMDKKNDQP and AATEAEVEDQNSERNDDNALNESL. Residues 622 to 707 are a coiled coil; the sequence is LSEQRFEREN…ELKKSNEHTR (86 aa).

This is an uncharacterized protein from Saccharum officinarum (Sugarcane).